The following is a 424-amino-acid chain: Glutamyl-tRNA reductase (424 aa).

Residues 53 to 56 (TCNR), serine 111, 116 to 118 (EPQ), and glutamine 122 each bind substrate. The active-site Nucleophile is cysteine 54. An NADP(+)-binding site is contributed by 191–196 (GAGEMI).

This sequence belongs to the glutamyl-tRNA reductase family. As to quaternary structure, homodimer.

It carries out the reaction (S)-4-amino-5-oxopentanoate + tRNA(Glu) + NADP(+) = L-glutamyl-tRNA(Glu) + NADPH + H(+). It functions in the pathway porphyrin-containing compound metabolism; protoporphyrin-IX biosynthesis; 5-aminolevulinate from L-glutamyl-tRNA(Glu): step 1/2. Catalyzes the NADPH-dependent reduction of glutamyl-tRNA(Glu) to glutamate 1-semialdehyde (GSA). The polypeptide is Glutamyl-tRNA reductase (Bordetella avium (strain 197N)).